The chain runs to 350 residues: TATA box-binding protein-like 2 (350 aa).

The segment at 82–150 (ENRDQTVTGN…QPSPETPNSN (69 aa)) is disordered. A compositionally biased stretch (basic and acidic residues) spans 94 to 116 (ASEESCRTRDRQSQLQLPDEHGS). Composition is skewed to polar residues over residues 118–128 (LNLNSNSSPDP) and 139–150 (SNQPSPETPNSN).

This sequence belongs to the TBP family. Interacts with TAF3. As to expression, expressed in myotubes and myofibers (at protein level). Expressed in a wide variety of tissues with highest levels in heart, lung, liver, uterus and placenta and especially the gonads. Expression is higher in the ovary than the testis, and within the ovary expression is localized to the oocytes.

The protein localises to the cytoplasm. Its subcellular location is the nucleus. Transcription factor required in complex with TAF3 for the differentiation of myoblasts into myocytes. The complex replaces TFIID at specific promoters at an early stage in the differentiation process. The chain is TATA box-binding protein-like 2 from Mus musculus (Mouse).